Reading from the N-terminus, the 166-residue chain is MTQGRQKEELQDITLLGNQNNKYEFDYTPEVLETFDNKHQGRDYFVKFNCPEFTSLCPITGQPDFATIYISYIPNIKMVESKSLKLYLFSFRNHGDFHEDCMNIIMNDLIDLMDPHYIEVWGKFTPRGGISIDPYTNYGRPNSKYEKMAEHRLMNHDLYPEKIDNR.

Cys-57 acts as the Thioimide intermediate in catalysis. Asp-64 acts as the Proton donor in catalysis. Substrate contacts are provided by residues 79–81 (VES) and 98–99 (HE).

The protein belongs to the GTP cyclohydrolase I family. QueF type 1 subfamily.

Its subcellular location is the cytoplasm. It carries out the reaction 7-aminomethyl-7-carbaguanine + 2 NADP(+) = 7-cyano-7-deazaguanine + 2 NADPH + 3 H(+). It participates in tRNA modification; tRNA-queuosine biosynthesis. Its function is as follows. Catalyzes the NADPH-dependent reduction of 7-cyano-7-deazaguanine (preQ0) to 7-aminomethyl-7-deazaguanine (preQ1). The polypeptide is NADPH-dependent 7-cyano-7-deazaguanine reductase (Staphylococcus haemolyticus (strain JCSC1435)).